Here is a 388-residue protein sequence, read N- to C-terminus: DNA primase small subunit PriS (388 aa).

Catalysis depends on residues aspartate 100, aspartate 102, and aspartate 288.

This sequence belongs to the eukaryotic-type primase small subunit family. As to quaternary structure, heterodimer of a small subunit (PriS) and a large subunit (PriL). Mg(2+) serves as cofactor. The cofactor is Mn(2+).

Functionally, catalytic subunit of DNA primase, an RNA polymerase that catalyzes the synthesis of short RNA molecules used as primers for DNA polymerase during DNA replication. The small subunit contains the primase catalytic core and has DNA synthesis activity on its own. Binding to the large subunit stabilizes and modulates the activity, increasing the rate of DNA synthesis while decreasing the length of the DNA fragments, and conferring RNA synthesis capability. The DNA polymerase activity may enable DNA primase to also catalyze primer extension after primer synthesis. May also play a role in DNA repair. This Methanospirillum hungatei JF-1 (strain ATCC 27890 / DSM 864 / NBRC 100397 / JF-1) protein is DNA primase small subunit PriS.